We begin with the raw amino-acid sequence, 112 residues long: DNA-binding protein TSIB_0525 (112 aa).

Belongs to the PDCD5 family.

The sequence is that of DNA-binding protein TSIB_0525 from Thermococcus sibiricus (strain DSM 12597 / MM 739).